The chain runs to 120 residues: MLVTVEFTYILILFFISLGLSIILFFLGYFLMFKVAYEDKLMGYECGFDPFGNARGEFDIRFYLVAILFLIFDLEITFLFPFSVSIMSMTLFSYSIMLIFLIILTIGFIYEIKKGALDWS.

3 helical membrane passes run 10–30 (ILIL…LGYF), 62–82 (FYLV…LFPF), and 89–109 (MTLF…IGFI).

It belongs to the complex I subunit 3 family.

It is found in the mitochondrion membrane. It catalyses the reaction a ubiquinone + NADH + 5 H(+)(in) = a ubiquinol + NAD(+) + 4 H(+)(out). Functionally, core subunit of the mitochondrial membrane respiratory chain NADH dehydrogenase (Complex I) that is believed to belong to the minimal assembly required for catalysis. Complex I functions in the transfer of electrons from NADH to the respiratory chain. The immediate electron acceptor for the enzyme is believed to be ubiquinone. In Dictyostelium citrinum (Slime mold), this protein is NADH-ubiquinone oxidoreductase chain 3 (nad3).